A 289-amino-acid polypeptide reads, in one-letter code: Nucleotide-binding protein CHY_0272 (289 aa).

8–15 (GLSGAGKT) serves as a coordination point for ATP. 59–62 (DVRG) serves as a coordination point for GTP.

The protein belongs to the RapZ-like family.

Displays ATPase and GTPase activities. The chain is Nucleotide-binding protein CHY_0272 from Carboxydothermus hydrogenoformans (strain ATCC BAA-161 / DSM 6008 / Z-2901).